The following is a 543-amino-acid chain: MRHSLPYHILRKRPMKLSTTVILMVSAVLFSVLLVVHLIYFSQISDMTRDGLANKALAVARTLADSPEIRQGLQKKPQESGIQAIAEAVRKRNDLLFIVVTDMQSLRYSHPEAQRIGQPFKGDDILNALNGEENVAINRGFLAQALRVFTPIYDENHKQIGVVAIGLELSRVTQQINDSRWSIIWSVLFGMLVGLIGTCILVKVLKKILFGLEPYEISTLFEQRQAMLQSIKEGVVAVDDRGEVTLINDAAQELLNYRKSQDDEKLSTLSHSWSQVVDVSEVLRDGTPRRDEEITIKDRLLLINTVPVRSNGVIIGAISTFRDKTEVRKLMQRLDGLVNYADALRERSHEFMNKLHVILGLLHLKSYKQLEDYILKTANNYQEEIGSLLGKIKSPVIAGFLISKINRATDLGHTLILNSESQLPDSGSEDQVATLITTLGNLIENALEALGPEPGGEISVTLHYRHGWLHCEVNDDGPGIAPDKIDHIFDKGVSTKGSERGVGLALVKQQVENLGGSIAVESEPGIFTQFFVQIPWDGERSNR.

Residues 1–20 (MRHSLPYHILRKRPMKLSTT) lie on the Cytoplasmic side of the membrane. The chain crosses the membrane as a helical span at residues 21–41 (VILMVSAVLFSVLLVVHLIYF). At 42-181 (SQISDMTRDG…VTQQINDSRW (140 aa)) the chain is on the periplasmic side. (R)-malate-binding positions include 107-110 (RYSH), K121, 140-142 (GFL), and R147. A helical transmembrane segment spans residues 182 to 202 (SIIWSVLFGMLVGLIGTCILV). At 203-543 (KVLKKILFGL…IPWDGERSNR (341 aa)) the chain is on the cytoplasmic side. The 112-residue stretch at 212–323 (LEPYEISTLF…IIGAISTFRD (112 aa)) folds into the PAS domain. The Histidine kinase domain occupies 346–538 (ERSHEFMNKL…QFFVQIPWDG (193 aa)). Phosphohistidine; by autocatalysis is present on H349.

In terms of assembly, homodimer. In terms of processing, autophosphorylated. The phosphoryl group is rapidly transferred to DcuR.

The protein resides in the cell inner membrane. It carries out the reaction ATP + protein L-histidine = ADP + protein N-phospho-L-histidine.. In terms of biological role, member of the two-component regulatory system DcuR/DcuS. Involved in the C4-dicarboxylate-stimulated regulation of the genes encoding the anaerobic fumarate respiratory system (frdABCD; nuoAN; dcuB; sdhCDAB; etc.). Weakly regulates the aerobic C4-dicarboxylate transporter dctA. Activates DcuR by phosphorylation. This chain is Sensor histidine kinase DcuS (dcuS), found in Shigella flexneri.